The chain runs to 670 residues: Transcriptional regulatory protein DOT6 (670 aa).

The segment covering 1–44 has biased composition (polar residues); that stretch reads MSISTSLNSASIHLSSMDTHPQLHSLTRQPHSSSTAMSKNEAQE. The tract at residues 1–78 is disordered; it reads MSISTSLNSA…SKNPSSWDPQ (78 aa). The span at 45 to 74 shows a compositional bias: low complexity; it reads SSPSLPASSSSSTSASASASSKNSSKNPSS. An HTH myb-type domain is found at 67-121; sequence NSSKNPSSWDPQDDLLLRHLKEVKKMGWKDISQYFPNRTPNACQFRWRRLKSGNL. A DNA-binding region (H-T-H motif) is located at residues 94-117; it reads WKDISQYFPNRTPNACQFRWRRLK. Over residues 226–242 the composition is skewed to basic residues; sequence HHPHQHLHHHPHHKTLK. Disordered regions lie at residues 226–250, 293–332, 406–436, and 483–659; these read HHPHQHLHHHPHHKTLKPRSNSHSF, TTPSSPNSSHVLLSSKSRRGSLANWSRRSSFNVSSNNTSR, HSSSVSSSSTLHKSKRGSFSGHSMKSSCNPT, and ADML…NSPL. Phosphoserine occurs at positions 245 and 247. Low complexity-rich tracts occupy residues 295–307 and 316–332; these read PSSPNSSHVLLSS and NWSRRSSFNVSSNNTSR. Polar residues predominate over residues 425–436; that stretch reads SGHSMKSSCNPT. Position 487 is a phosphoserine (Ser-487). Position 489 is a phosphothreonine (Thr-489). Ser-491 is subject to Phosphoserine. A compositionally biased stretch (basic and acidic residues) spans 512-522; that stretch reads DDDKGSDKEDV. Low complexity-rich tracts occupy residues 544–561 and 587–598; these read SSNKTVFSSSSSNISSKD and TITSDTSSSAAT. Residues 599–608 are compositionally biased toward polar residues; it reads MNRTPNSKNP. The segment covering 622 to 659 has biased composition (low complexity); that stretch reads ITPRPKPSSTTTSITTETTNNMINHSSSTTTTTNNSPL.

The protein belongs to the DOT6 family. Component of the RPD3C(L) complex composed of at least ASH1, CTI6, DEP1, DOT6, PHO23, RPD3, RXT2, RXT3, SAP30, SDS3, SIN3, TOD6; UME1 and UME6.

Its subcellular location is the nucleus. Component of the RPD3 histone deacetylase complex RPD3C(L) responsible for the deacetylation of lysine residues on the N-terminal part of the core histones (H2A, H2B, H3 and H4). Histone deacetylation gives a tag for epigenetic repression and plays an important role in transcriptional regulation, cell cycle progression and developmental events. DOT6 binds to sequences containing the core CGATG, which resembles the PAC (Polymerase A and C) motif. This is Transcriptional regulatory protein DOT6 (DOT6) from Saccharomyces cerevisiae (strain ATCC 204508 / S288c) (Baker's yeast).